Here is a 236-residue protein sequence, read N- to C-terminus: Small ribosomal subunit protein uS3 (236 aa).

Positions 39 to 107 (VREFLKKSLS…PAQISITEIK (69 aa)) constitute a KH type-2 domain.

It belongs to the universal ribosomal protein uS3 family. In terms of assembly, part of the 30S ribosomal subunit. Forms a tight complex with proteins S10 and S14.

Functionally, binds the lower part of the 30S subunit head. Binds mRNA in the 70S ribosome, positioning it for translation. The protein is Small ribosomal subunit protein uS3 of Wigglesworthia glossinidia brevipalpis.